The primary structure comprises 657 residues: Threonine--tRNA ligase (657 aa).

One can recognise a TGS domain in the interval 1–62 (MALDITFPDG…AHSGQLQIMT (62 aa)). Residues 240–538 (DHRVIGRDLD…LTEIYKGAFP (299 aa)) are catalytic. C334, H385, and H515 together coordinate Zn(2+).

Belongs to the class-II aminoacyl-tRNA synthetase family. As to quaternary structure, homodimer. Zn(2+) serves as cofactor.

Its subcellular location is the cytoplasm. It carries out the reaction tRNA(Thr) + L-threonine + ATP = L-threonyl-tRNA(Thr) + AMP + diphosphate + H(+). Its function is as follows. Catalyzes the attachment of threonine to tRNA(Thr) in a two-step reaction: L-threonine is first activated by ATP to form Thr-AMP and then transferred to the acceptor end of tRNA(Thr). Also edits incorrectly charged L-seryl-tRNA(Thr). This chain is Threonine--tRNA ligase, found in Lacticaseibacillus paracasei (strain ATCC 334 / BCRC 17002 / CCUG 31169 / CIP 107868 / KCTC 3260 / NRRL B-441) (Lactobacillus paracasei).